A 778-amino-acid chain; its full sequence is Endonuclease MutS2 (778 aa).

G328–T335 is a binding site for ATP. Residues L702–K777 form the Smr domain.

Belongs to the DNA mismatch repair MutS family. MutS2 subfamily. As to quaternary structure, homodimer. Binds to stalled ribosomes, contacting rRNA.

Endonuclease that is involved in the suppression of homologous recombination and thus may have a key role in the control of bacterial genetic diversity. Functionally, acts as a ribosome collision sensor, splitting the ribosome into its 2 subunits. Detects stalled/collided 70S ribosomes which it binds and splits by an ATP-hydrolysis driven conformational change. Acts upstream of the ribosome quality control system (RQC), a ribosome-associated complex that mediates the extraction of incompletely synthesized nascent chains from stalled ribosomes and their subsequent degradation. Probably generates substrates for RQC. This chain is Endonuclease MutS2, found in Streptococcus pneumoniae (strain Hungary19A-6).